The primary structure comprises 330 residues: Putative F-box protein At1g57690 (330 aa).

The region spanning 25 to 72 (VDIISSLPDVILQHILFSFQTKYAIRTSVLSKRWRHEADAINKALSQY) is the F-box domain.

The sequence is that of Putative F-box protein At1g57690 from Arabidopsis thaliana (Mouse-ear cress).